We begin with the raw amino-acid sequence, 295 residues long: 4-hydroxy-tetrahydrodipicolinate synthase (295 aa).

Thr48 contributes to the pyruvate binding site. The Proton donor/acceptor role is filled by Tyr135. Lys163 functions as the Schiff-base intermediate with substrate in the catalytic mechanism. Residue Val204 coordinates pyruvate.

It belongs to the DapA family. As to quaternary structure, homotetramer; dimer of dimers.

It localises to the cytoplasm. It catalyses the reaction L-aspartate 4-semialdehyde + pyruvate = (2S,4S)-4-hydroxy-2,3,4,5-tetrahydrodipicolinate + H2O + H(+). Its pathway is amino-acid biosynthesis; L-lysine biosynthesis via DAP pathway; (S)-tetrahydrodipicolinate from L-aspartate: step 3/4. Its function is as follows. Catalyzes the condensation of (S)-aspartate-beta-semialdehyde [(S)-ASA] and pyruvate to 4-hydroxy-tetrahydrodipicolinate (HTPA). This is 4-hydroxy-tetrahydrodipicolinate synthase from Francisella tularensis subsp. novicida (strain U112).